A 322-amino-acid chain; its full sequence is Probable cAMP-dependent protein kinase catalytic subunit (322 aa).

Positions Phe7–Phe261 constitute a Protein kinase domain. Residues Val13–Val21 and Lys37 each bind ATP. Asp132 functions as the Proton acceptor in the catalytic mechanism. In terms of domain architecture, AGC-kinase C-terminal spans Lys262 to Leu322.

Belongs to the protein kinase superfamily. AGC Ser/Thr protein kinase family. cAMP subfamily.

The enzyme catalyses L-seryl-[protein] + ATP = O-phospho-L-seryl-[protein] + ADP + H(+). The catalysed reaction is L-threonyl-[protein] + ATP = O-phospho-L-threonyl-[protein] + ADP + H(+). This chain is Probable cAMP-dependent protein kinase catalytic subunit, found in Encephalitozoon cuniculi (strain GB-M1) (Microsporidian parasite).